The following is a 274-amino-acid chain: ATP synthase subunit a (274 aa).

5 consecutive transmembrane segments (helical) span residues 44-64 (VDSMFFSLVLGSFFLSIFYMV), 110-130 (FIWVFLMNLMDLVPIDFFPFI), 142-164 (IVPSADINITLSMSLGVFFLILF), 212-232 (LFGNMYAGEMIFILIAGLLPW), and 243-263 (AIFHILIISLQAFIFMVLTIV).

Belongs to the ATPase A chain family. F-type ATPases have 2 components, CF(1) - the catalytic core - and CF(0) - the membrane proton channel. CF(1) has five subunits: alpha(3), beta(3), gamma(1), delta(1), epsilon(1). CF(0) has three main subunits: a(1), b(2) and c(9-12). The alpha and beta chains form an alternating ring which encloses part of the gamma chain. CF(1) is attached to CF(0) by a central stalk formed by the gamma and epsilon chains, while a peripheral stalk is formed by the delta and b chains.

It is found in the cell membrane. In terms of biological role, key component of the proton channel; it plays a direct role in the translocation of protons across the membrane. This chain is ATP synthase subunit a, found in Buchnera aphidicola subsp. Acyrthosiphon pisum (strain APS) (Acyrthosiphon pisum symbiotic bacterium).